The chain runs to 311 residues: Coproporphyrin III ferrochelatase 1 (311 aa).

Residues tyrosine 12, arginine 29, 45-46 (RY), serine 53, and tyrosine 124 contribute to the Fe-coproporphyrin III site. Fe(2+) contacts are provided by histidine 182 and glutamate 263.

It belongs to the ferrochelatase family.

It is found in the cytoplasm. The catalysed reaction is Fe-coproporphyrin III + 2 H(+) = coproporphyrin III + Fe(2+). The protein operates within porphyrin-containing compound metabolism; protoheme biosynthesis. Involved in coproporphyrin-dependent heme b biosynthesis. Catalyzes the insertion of ferrous iron into coproporphyrin III to form Fe-coproporphyrin III. This Bacillus thuringiensis subsp. konkukian (strain 97-27) protein is Coproporphyrin III ferrochelatase 1.